A 133-amino-acid polypeptide reads, in one-letter code: Small ribosomal subunit protein uS8 (133 aa).

Positions 1 to 30 (MANHDPISDMLTRIRNASEKRHETTKVPAS) are disordered. The segment covering 16 to 25 (NASEKRHETT) has biased composition (basic and acidic residues).

The protein belongs to the universal ribosomal protein uS8 family. Part of the 30S ribosomal subunit. Contacts proteins S5 and S12.

One of the primary rRNA binding proteins, it binds directly to 16S rRNA central domain where it helps coordinate assembly of the platform of the 30S subunit. This is Small ribosomal subunit protein uS8 from Synechococcus sp. (strain CC9902).